A 375-amino-acid polypeptide reads, in one-letter code: V-type proton ATPase subunit C (375 aa).

This sequence belongs to the V-ATPase C subunit family. In terms of assembly, V-ATPase is a heteromultimeric enzyme composed of a peripheral catalytic V1 complex (components A to H) attached to an integral membrane V0 proton pore complex (components: a, c, c'', d and e). Phosphorylated on Ser/Thr residues by WNK8.

The protein resides in the vacuole membrane. Its function is as follows. Subunit of the peripheral V1 complex of vacuolar ATPase. Subunit C is necessary for the assembly of the catalytic sector of the enzyme and is likely to have a specific function in its catalytic activity. V-ATPase is responsible for acidifying a variety of intracellular compartments in eukaryotic cells. The sequence is that of V-type proton ATPase subunit C (VHA-C) from Arabidopsis thaliana (Mouse-ear cress).